The following is a 221-amino-acid chain: Large ribosomal subunit protein uL4 (221 aa).

A disordered region spans residues 44–102; sequence AARQGTHKVKRRGEVRGGGKKPYRQKGTGRARQGSTRAPQFAGGGVVHGPTPRDYSQRT. The span at 61-72 shows a compositional bias: basic residues; it reads GGKKPYRQKGTG.

The protein belongs to the universal ribosomal protein uL4 family. As to quaternary structure, part of the 50S ribosomal subunit.

Its function is as follows. One of the primary rRNA binding proteins, this protein initially binds near the 5'-end of the 23S rRNA. It is important during the early stages of 50S assembly. It makes multiple contacts with different domains of the 23S rRNA in the assembled 50S subunit and ribosome. In terms of biological role, forms part of the polypeptide exit tunnel. This chain is Large ribosomal subunit protein uL4, found in Streptomyces avermitilis (strain ATCC 31267 / DSM 46492 / JCM 5070 / NBRC 14893 / NCIMB 12804 / NRRL 8165 / MA-4680).